The primary structure comprises 49 residues: Osteocalcin (49 aa).

A Gla domain is found at 1 to 47 (YLDSGLGAPVPYPDPLEPKREVCELNPNCDELADHIGFQEAYQRFYG). Ca(2+)-binding residues include E17, E21, E24, and D30. 3 positions are modified to 4-carboxyglutamate: E17, E21, and E24. C23 and C29 are disulfide-bonded.

Belongs to the osteocalcin/matrix Gla protein family. Post-translationally, gamma-carboxyglutamate residues are formed by vitamin K dependent carboxylation by GGCX. These residues are essential for the binding of calcium. Decarboxylation promotes the hormone activity.

It localises to the secreted. Functionally, the carboxylated form is one of the main organic components of the bone matrix, which constitutes 1-2% of the total bone protein. It acts as a negative regulator of bone formation and is required to limit bone formation without impairing bone resorption or mineralization. The carboxylated form binds strongly to apatite and calcium. Its function is as follows. The uncarboxylated form acts as a hormone secreted by osteoblasts, which regulates different cellular processes, such as energy metabolism, male fertility and brain development. Regulates of energy metabolism by acting as a hormone favoring pancreatic beta-cell proliferation, insulin secretion and sensitivity and energy expenditure. Uncarboxylated osteocalcin hormone also promotes testosterone production in the testes: acts as a ligand for G protein-coupled receptor GPRC6A at the surface of Leydig cells, initiating a signaling response that promotes the expression of enzymes required for testosterone synthesis in a CREB-dependent manner. Also acts as a regulator of brain development: osteocalcin hormone crosses the blood-brain barrier and acts as a ligand for GPR158 on neurons, initiating a signaling response that prevents neuronal apoptosis in the hippocampus, favors the synthesis of all monoamine neurotransmitters and inhibits that of gamma-aminobutyric acid (GABA). Osteocalcin also crosses the placenta during pregnancy and maternal osteocalcin is required for fetal brain development. This is Osteocalcin (BGLAP) from Canis lupus familiaris (Dog).